Here is a 1093-residue protein sequence, read N- to C-terminus: Probable cellulose synthase A catalytic subunit 3 [UDP-forming] (1093 aa).

The Cytoplasmic segment spans residues 1–280; the sequence is MEASAGLVAG…PSSQINPYRM (280 aa). The Zn(2+) site is built by Cys-39, Cys-42, Cys-58, Cys-61, Cys-66, Cys-69, Cys-81, and Cys-84. Residues 39–85 form an RING-type; degenerate zinc finger; sequence CQICGDDVGLNPDGEPFVACNECAFPVCRDCYEYERREGTQNCPQCK. The segment covering 233-246 has biased composition (basic and acidic residues); that stretch reads LHQMRNDGGGKDWD. The segment at 233-257 is disordered; that stretch reads LHQMRNDGGGKDWDGDGDDGDLPLM. The helical transmembrane segment at 281-301 threads the bilayer; it reads VIIIRLVVLGFFFHYRVMHPV. Over 302 to 303 the chain is Extracellular; it reads PD. A helical membrane pass occupies residues 304–324; sequence AFALWLISVICEIWFAMSWIL. The Cytoplasmic portion of the chain corresponds to 325–869; sequence DQFPKWFPIE…CLERFSYINS (545 aa). Ser-363, Lys-369, Glu-370, and Asp-399 together coordinate UDP-alpha-D-glucose. Asp-399 is a catalytic residue. Residues 453 to 480 adopt a coiled-coil conformation; that stretch reads VRERRAMKREYEEFKVRINALVAKAQKV. Lys-540 serves as a coordination point for UDP-alpha-D-glucose. Mn(2+) contacts are provided by Lys-541 and Asp-565. Residue Asp-793 is part of the active site. A helical membrane pass occupies residues 870–890; it reads IVYPFTSIPLLAYCTLPAICL. The Extracellular segment spans residues 891–902; that stretch reads LTGKFITPELTN. A helical membrane pass occupies residues 903-923; sequence VASLWFMSLFICIFATGILEM. Topologically, residues 924–939 are cytoplasmic; the sequence is RWSGVGIDDWWRNEQF. A helical transmembrane segment spans residues 940-960; sequence WVIGGVSSHLFALFQGLLKVI. The Extracellular portion of the chain corresponds to 961–988; sequence AGIDTSFTVTSKGGDDEEFSELYTFKWT. Residues 989 to 1009 traverse the membrane as a helical segment; the sequence is TLLIPPTTLLLLNFIGVVAGV. Topologically, residues 1010-1020 are cytoplasmic; it reads SNAINNGYESW. The helical transmembrane segment at 1021–1041 threads the bilayer; it reads GPLFGKLFFAFWVIVHLYPFL. At 1042–1050 the chain is on the extracellular side; it reads KGLVGRQNR. Residues 1051–1071 form a helical membrane-spanning segment; the sequence is TPTIVIVWSILLASIFSLLWV. At 1072–1093 the chain is on the cytoplasmic side; sequence RIDPFLAKNDGPLLEECGLDCN.

The protein belongs to the glycosyltransferase 2 family. Plant cellulose synthase subfamily. Requires Mn(2+) as cofactor. It depends on Zn(2+) as a cofactor.

The protein localises to the cell membrane. It carries out the reaction [(1-&gt;4)-beta-D-glucosyl](n) + UDP-alpha-D-glucose = [(1-&gt;4)-beta-D-glucosyl](n+1) + UDP + H(+). It functions in the pathway glycan metabolism; plant cellulose biosynthesis. Probable catalytic subunit of cellulose synthase terminal complexes ('rosettes'), required for beta-1,4-glucan microfibril crystallization, a major mechanism of the cell wall formation. This chain is Probable cellulose synthase A catalytic subunit 3 [UDP-forming] (CESA3), found in Oryza sativa subsp. japonica (Rice).